We begin with the raw amino-acid sequence, 785 residues long: Endonuclease MutS2 (785 aa).

335 to 342 (GPNTGGKT) is an ATP binding site. The Smr domain occupies 710-785 (LDLRGERYED…GNGVTIVEFK (76 aa)).

This sequence belongs to the DNA mismatch repair MutS family. MutS2 subfamily. Homodimer. Binds to stalled ribosomes, contacting rRNA.

Endonuclease that is involved in the suppression of homologous recombination and thus may have a key role in the control of bacterial genetic diversity. Functionally, acts as a ribosome collision sensor, splitting the ribosome into its 2 subunits. Detects stalled/collided 70S ribosomes which it binds and splits by an ATP-hydrolysis driven conformational change. Acts upstream of the ribosome quality control system (RQC), a ribosome-associated complex that mediates the extraction of incompletely synthesized nascent chains from stalled ribosomes and their subsequent degradation. Probably generates substrates for RQC. The sequence is that of Endonuclease MutS2 from Listeria monocytogenes serotype 4a (strain HCC23).